Reading from the N-terminus, the 289-residue chain is Acetyl-coenzyme A carboxylase carboxyl transferase subunit beta (289 aa).

One can recognise a CoA carboxyltransferase N-terminal domain in the interval 24–289; the sequence is LWIKCPESGE…NSPRRAPIPA (266 aa).

It belongs to the AccD/PCCB family. As to quaternary structure, acetyl-CoA carboxylase is a heterohexamer composed of biotin carboxyl carrier protein (AccB), biotin carboxylase (AccC) and two subunits each of ACCase subunit alpha (AccA) and ACCase subunit beta (AccD).

It is found in the cytoplasm. It catalyses the reaction N(6)-carboxybiotinyl-L-lysyl-[protein] + acetyl-CoA = N(6)-biotinyl-L-lysyl-[protein] + malonyl-CoA. It participates in lipid metabolism; malonyl-CoA biosynthesis; malonyl-CoA from acetyl-CoA: step 1/1. Component of the acetyl coenzyme A carboxylase (ACC) complex. Biotin carboxylase (BC) catalyzes the carboxylation of biotin on its carrier protein (BCCP) and then the CO(2) group is transferred by the transcarboxylase to acetyl-CoA to form malonyl-CoA. The protein is Acetyl-coenzyme A carboxylase carboxyl transferase subunit beta of Beijerinckia indica subsp. indica (strain ATCC 9039 / DSM 1715 / NCIMB 8712).